We begin with the raw amino-acid sequence, 186 residues long: ATP synthase subunit delta (186 aa).

It belongs to the ATPase delta chain family. As to quaternary structure, F-type ATPases have 2 components, F(1) - the catalytic core - and F(0) - the membrane proton channel. F(1) has five subunits: alpha(3), beta(3), gamma(1), delta(1), epsilon(1). F(0) has three main subunits: a(1), b(2) and c(10-14). The alpha and beta chains form an alternating ring which encloses part of the gamma chain. F(1) is attached to F(0) by a central stalk formed by the gamma and epsilon chains, while a peripheral stalk is formed by the delta and b chains.

The protein resides in the cell membrane. Its function is as follows. F(1)F(0) ATP synthase produces ATP from ADP in the presence of a proton or sodium gradient. F-type ATPases consist of two structural domains, F(1) containing the extramembraneous catalytic core and F(0) containing the membrane proton channel, linked together by a central stalk and a peripheral stalk. During catalysis, ATP synthesis in the catalytic domain of F(1) is coupled via a rotary mechanism of the central stalk subunits to proton translocation. This protein is part of the stalk that links CF(0) to CF(1). It either transmits conformational changes from CF(0) to CF(1) or is implicated in proton conduction. This Mycoplasmopsis agalactiae (strain NCTC 10123 / CIP 59.7 / PG2) (Mycoplasma agalactiae) protein is ATP synthase subunit delta.